We begin with the raw amino-acid sequence, 185 residues long: Large ribosomal subunit protein uL5 (185 aa).

The protein belongs to the universal ribosomal protein uL5 family. In terms of assembly, part of the 50S ribosomal subunit; part of the 5S rRNA/L5/L18/L25 subcomplex. Contacts the 5S rRNA and the P site tRNA. Forms a bridge to the 30S subunit in the 70S ribosome.

This is one of the proteins that bind and probably mediate the attachment of the 5S RNA into the large ribosomal subunit, where it forms part of the central protuberance. In the 70S ribosome it contacts protein S13 of the 30S subunit (bridge B1b), connecting the 2 subunits; this bridge is implicated in subunit movement. Contacts the P site tRNA; the 5S rRNA and some of its associated proteins might help stabilize positioning of ribosome-bound tRNAs. This is Large ribosomal subunit protein uL5 from Nitrobacter hamburgensis (strain DSM 10229 / NCIMB 13809 / X14).